Consider the following 519-residue polypeptide: T-box transcription factor TBX5 (519 aa).

The tract at residues 1-46 (MADTEEAYGMPDTPVEAEPKELQCEPKQDNQLGASSKTPTSPPAAF) is disordered. Over residues 17–28 (AEPKELQCEPKQ) the composition is skewed to basic and acidic residues. Positions 29–39 (DNQLGASSKTP) are enriched in polar residues. A DNA-binding region (T-box) is located at residues 63-238 (LWLKFHEVGT…NNPFAKGFRG (176 aa)). Disordered stretches follow at residues 254–282 (EYPV…RNIT), 293–312 (CENG…SAYT), and 326–372 (KRKV…TSFR). Positions 262 to 282 (TVRQKVSSNHSPFSQETRNIT) are enriched in polar residues. The segment covering 298–309 (SSTSQDLLPSSS) has biased composition (low complexity). Positions 328–342 (KVSEEPAEHSYKKPY) are enriched in basic and acidic residues.

In terms of assembly, monomer. Homodimer (via the T-box); binds DNA as homodimer.

It localises to the nucleus. The protein resides in the cytoplasm. DNA-binding protein that regulates the transcription of several genes and is involved in heart development and limb pattern formation. May bind to the core DNA motif of promoters. The polypeptide is T-box transcription factor TBX5 (tbx5) (Xenopus laevis (African clawed frog)).